Reading from the N-terminus, the 368-residue chain is Quinolinate synthase (368 aa).

The iminosuccinate site is built by histidine 46 and serine 63. Residue cysteine 110 participates in [4Fe-4S] cluster binding. Iminosuccinate-binding positions include 141-143 (YVN) and serine 162. Position 230 (cysteine 230) interacts with [4Fe-4S] cluster. Iminosuccinate contacts are provided by residues 256-258 (HPE) and threonine 273. Cysteine 320 serves as a coordination point for [4Fe-4S] cluster.

Belongs to the quinolinate synthase family. Type 3 subfamily. Requires [4Fe-4S] cluster as cofactor.

The protein resides in the cytoplasm. It carries out the reaction iminosuccinate + dihydroxyacetone phosphate = quinolinate + phosphate + 2 H2O + H(+). The protein operates within cofactor biosynthesis; NAD(+) biosynthesis; quinolinate from iminoaspartate: step 1/1. Functionally, catalyzes the condensation of iminoaspartate with dihydroxyacetone phosphate to form quinolinate. This Bacillus cereus (strain ATCC 10987 / NRS 248) protein is Quinolinate synthase.